The sequence spans 488 residues: pH-response regulator protein palC (488 aa).

The BRO1 domain maps to 2-430 (PPYLYRLPTT…TVAFQPVPPV (429 aa)). The interval 449-488 (PPPSKFSPSRIGHLNEEQGNDSPELGETEDTSYAGKGNYF) is disordered.

This sequence belongs to the palC family.

Functionally, required for the proteolytic cleavage of the transcription factor RIM101 in response to alkaline ambient pH. This Cryptococcus neoformans var. neoformans serotype D (strain B-3501A) (Filobasidiella neoformans) protein is pH-response regulator protein palC.